A 165-amino-acid chain; its full sequence is V-type proton ATPase 16 kDa proteolipid subunit (165 aa).

Residues 1-12 are Lumenal-facing; that stretch reads MSTVFNGDETAP. Residues 13 to 33 form a helical membrane-spanning segment; it reads FFGFLGAAAALVFSCMGAAYG. Topologically, residues 34–55 are cytoplasmic; that stretch reads TAKSGVGVASMGVMRPELVMKS. The chain crosses the membrane as a helical span at residues 56–76; the sequence is IVPVVMAGVLGIYGLIIAVII. The Lumenal portion of the chain corresponds to 77–95; it reads STGINPKAKSYYLFDGYAH. Residues 96–117 traverse the membrane as a helical segment; sequence LSSGLACGLAGLSAGMAIGIVG. Residues 118–129 are Cytoplasmic-facing; the sequence is DAGVRANAQQPK. Residues 130–155 form a helical membrane-spanning segment; it reads LFVGMILILIFAEALALYGLIVGIIL. At 156 to 165 the chain is on the lumenal side; sequence SSRAGQSRAD.

Belongs to the V-ATPase proteolipid subunit family. V-ATPase is a heteromultimeric enzyme composed of a peripheral catalytic V1 complex (main components: subunits A, B, C, D, E, and F) attached to an integral membrane V0 proton pore complex (main component: the proteolipid protein; which is present as a hexamer that forms the proton-conducting pore).

Its subcellular location is the vacuole membrane. Proton-conducting pore forming subunit of the membrane integral V0 complex of vacuolar ATPase. V-ATPase is responsible for acidifying a variety of intracellular compartments in eukaryotic cells. This is V-type proton ATPase 16 kDa proteolipid subunit (VMAC1) from Mesembryanthemum crystallinum (Common ice plant).